The following is a 382-amino-acid chain: 1-deoxy-D-xylulose 5-phosphate reductoisomerase (382 aa).

Thr10, Gly11, Ser12, Ile13, Gly36, and Asn122 together coordinate NADPH. Lys123 is a 1-deoxy-D-xylulose 5-phosphate binding site. Glu124 contributes to the NADPH binding site. Asp148 is a binding site for Mn(2+). The 1-deoxy-D-xylulose 5-phosphate site is built by Ser149, Glu150, Ser174, and His197. Position 150 (Glu150) interacts with Mn(2+). Gly203 provides a ligand contact to NADPH. Ser210, Asn215, Lys216, and Glu219 together coordinate 1-deoxy-D-xylulose 5-phosphate. Mn(2+) is bound at residue Glu219.

It belongs to the DXR family. Requires Mg(2+) as cofactor. The cofactor is Mn(2+).

The enzyme catalyses 2-C-methyl-D-erythritol 4-phosphate + NADP(+) = 1-deoxy-D-xylulose 5-phosphate + NADPH + H(+). It functions in the pathway isoprenoid biosynthesis; isopentenyl diphosphate biosynthesis via DXP pathway; isopentenyl diphosphate from 1-deoxy-D-xylulose 5-phosphate: step 1/6. Its function is as follows. Catalyzes the NADPH-dependent rearrangement and reduction of 1-deoxy-D-xylulose-5-phosphate (DXP) to 2-C-methyl-D-erythritol 4-phosphate (MEP). This chain is 1-deoxy-D-xylulose 5-phosphate reductoisomerase, found in Chlorobium phaeobacteroides (strain BS1).